The chain runs to 116 residues: Galanin-like peptide (116 aa).

Residues 1 to 24 form the signal peptide; it reads MAPPSVPLVLLLVLLLSLAETPAS. A propeptide spanning residues 87 to 116 is cleaved from the precursor; the sequence is NVMETFAKPEIGDLGMLSMKIPKEEDVLKS.

The protein belongs to the galanin family. In terms of tissue distribution, isoform 2 is found in ganglia of ganglioneuroma and ganglioneuroblastoma, as well as in differentiated tumor cells of neuroblastoma tissues. Not found in undifferentiated neuroblasts. Isoform 2 is found in the skin, in pericytes covering microvascular arterioles and venules on their abluminal surfaces. In larger vessels, isoform 2 is expressed in layers of smooth muscle cells. Isoform 2 is not detected in endothelial cells.

The protein localises to the secreted. Functionally, hypothalamic neuropeptide which binds to the G-protein-coupled galanin receptors (GALR1, GALR2 and GALR3). Involved in a large number of putative physiological functions in CNS homeostatic processes, including the regulation of gonadotropin-releasing hormone secretion. Exhibits potent and dose-dependent vasoconstrictor and anti-edema activity in the cutaneous microvasculature, a physiologic effects which does not appear to be mediated via GALR1 or GALR2. Exhibits antimicrobial activity against Gram-negative bacterias, inducing bacterial membrane blebbing. The chain is Galanin-like peptide (GALP) from Homo sapiens (Human).